A 387-amino-acid polypeptide reads, in one-letter code: S-adenosylmethionine synthase (387 aa).

Residue H16 participates in ATP binding. D18 provides a ligand contact to Mg(2+). E44 contacts K(+). Residues E57 and Q100 each coordinate L-methionine. Residues Q100 to E110 form a flexible loop region. ATP-binding positions include D167–K169, R232–F233, D241, R247–K248, A264, and K268. D241 provides a ligand contact to L-methionine. K272 serves as a coordination point for L-methionine.

The protein belongs to the AdoMet synthase family. As to quaternary structure, homotetramer; dimer of dimers. Requires Mg(2+) as cofactor. K(+) serves as cofactor.

The protein resides in the cytoplasm. The catalysed reaction is L-methionine + ATP + H2O = S-adenosyl-L-methionine + phosphate + diphosphate. Its pathway is amino-acid biosynthesis; S-adenosyl-L-methionine biosynthesis; S-adenosyl-L-methionine from L-methionine: step 1/1. In terms of biological role, catalyzes the formation of S-adenosylmethionine (AdoMet) from methionine and ATP. The overall synthetic reaction is composed of two sequential steps, AdoMet formation and the subsequent tripolyphosphate hydrolysis which occurs prior to release of AdoMet from the enzyme. The sequence is that of S-adenosylmethionine synthase from Janthinobacterium sp. (strain Marseille) (Minibacterium massiliensis).